A 520-amino-acid chain; its full sequence is Cysteine--tRNA ligase (520 aa).

Residue Cys-29 participates in Zn(2+) binding. The 'HIGH' region signature appears at 31-41 (PTVYNYPHLGN). Zn(2+) contacts are provided by Cys-227, His-252, and Glu-256. Residues 301–305 (KMSKS) carry the 'KMSKS' region motif. Residue Lys-304 participates in ATP binding.

The protein belongs to the class-I aminoacyl-tRNA synthetase family. Monomer. Requires Zn(2+) as cofactor.

The protein resides in the cytoplasm. The enzyme catalyses tRNA(Cys) + L-cysteine + ATP = L-cysteinyl-tRNA(Cys) + AMP + diphosphate. In Treponema pallidum (strain Nichols), this protein is Cysteine--tRNA ligase (cysS).